Here is an 86-residue protein sequence, read N- to C-terminus: Centromere protein W (86 aa).

It belongs to the CENP-W/WIP1 family. Heterodimer with CENPT; this dimer coassembles with CENPS-CENPX heterodimers at centromeres to form the tetrameric CENP-T-W-S-X complex, which is a subcomplex of the large constitutive centromere-associated network (CCAN, also known as the interphase centromere complex or ICEN). Interacts with NPM1.

The protein localises to the nucleus. It is found in the chromosome. The protein resides in the centromere. Its subcellular location is the kinetochore. It localises to the nucleus matrix. The protein localises to the nucleolus. Functionally, component of the CENPA-NAC (nucleosome-associated) complex, a complex that plays a central role in assembly of kinetochore proteins, mitotic progression and chromosome segregation. The CENPA-NAC complex recruits the CENPA-CAD (nucleosome distal) complex and may be involved in incorporation of newly synthesized CENPA into centromeres. Part of a nucleosome-associated complex that binds specifically to histone H3-containing nucleosomes at the centromere, as opposed to nucleosomes containing CENPA. Component of the heterotetrameric CENP-T-W-S-X complex that binds and supercoils DNA, and plays an important role in kinetochore assembly. CENPW has a fundamental role in kinetochore assembly and function. It is one of the inner kinetochore proteins, with most further proteins binding downstream. Required for normal chromosome organization and normal progress through mitosis. The chain is Centromere protein W (Cenpw) from Rattus norvegicus (Rat).